Here is a 29-residue protein sequence, read N- to C-terminus: U1-pseudomyrmecitoxin-Pt1 subunit SS1 (29 aa).

This sequence belongs to the myrmexin family. Heterodimer composed of subunit SS1 and subunit LS1 (U1-PSDTX-Pt1b), and heterodimer composed of subunit SS1 and LS2 (U1-PSDTX-Pt1a); disulfide-linked. In terms of tissue distribution, expressed by the venom gland.

The protein resides in the secreted. Functionally, this heterodimer may have anti-inflammatory properties, since the myrmexin complex (composed of 6 SS-LS heterodimers) inhibits carrageenin-induced edema in a dose-dependent manner (after subcutaneous injection into rats). The chain is U1-pseudomyrmecitoxin-Pt1 subunit SS1 from Pseudomyrmex triplarinus (Ant).